A 275-amino-acid chain; its full sequence is Elongation factor Ts (275 aa).

The involved in Mg(2+) ion dislocation from EF-Tu stretch occupies residues 76–79 (TDFV).

It belongs to the EF-Ts family.

The protein localises to the cytoplasm. Associates with the EF-Tu.GDP complex and induces the exchange of GDP to GTP. It remains bound to the aminoacyl-tRNA.EF-Tu.GTP complex up to the GTP hydrolysis stage on the ribosome. The chain is Elongation factor Ts from Salinispora tropica (strain ATCC BAA-916 / DSM 44818 / JCM 13857 / NBRC 105044 / CNB-440).